Reading from the N-terminus, the 181-residue chain is Oligoribonuclease (181 aa).

In terms of domain architecture, Exonuclease spans 8–171 (LIWIDLEMTG…DDIRESVAEL (164 aa)). Tyr-129 is a catalytic residue.

This sequence belongs to the oligoribonuclease family.

The protein resides in the cytoplasm. Functionally, 3'-to-5' exoribonuclease specific for small oligoribonucleotides. The chain is Oligoribonuclease from Salmonella choleraesuis (strain SC-B67).